The following is a 236-amino-acid chain: Small ribosomal subunit protein uS3 (236 aa).

In terms of domain architecture, KH type-2 spans 39-107 (IRKFLKKELY…EISINIKEVK (69 aa)). A compositionally biased stretch (basic and acidic residues) spans 213-229 (QPEKKEEAPARDKEGRG). Residues 213–236 (QPEKKEEAPARDKEGRGTRRRGRQ) are disordered.

This sequence belongs to the universal ribosomal protein uS3 family. As to quaternary structure, part of the 30S ribosomal subunit. Forms a tight complex with proteins S10 and S14.

Binds the lower part of the 30S subunit head. Binds mRNA in the 70S ribosome, positioning it for translation. This is Small ribosomal subunit protein uS3 from Wolinella succinogenes (strain ATCC 29543 / DSM 1740 / CCUG 13145 / JCM 31913 / LMG 7466 / NCTC 11488 / FDC 602W) (Vibrio succinogenes).